The primary structure comprises 111 residues: C-type lectin lectoxin-Enh1 (111 aa).

The N-terminal stretch at 1-23 (MGQFTVVSLGLLAMFLSLSGAKG) is a signal peptide. A disulfide bridge links Cys-26 with Cys-37. The C-type lectin domain occupies 33–108 (RNGVCNKLFP…CASLHPFICQ (76 aa)). A Mannose-binding motif is present at residues 72 to 74 (EPN). 3 residues coordinate Ca(2+): Glu-80, Asn-95, and Asp-96. An intrachain disulfide couples Cys-82 to Cys-99.

This sequence belongs to the true venom lectin family. In terms of tissue distribution, expressed by the venom gland.

It is found in the secreted. Its function is as follows. Mannose-binding lectin which recognizes specific carbohydrate structures and agglutinates a variety of animal cells by binding to cell-surface glycoproteins and glycolipids. May be a calcium-dependent lectin. This Pseudoferania polylepis (Macleay's water snake) protein is C-type lectin lectoxin-Enh1.